A 345-amino-acid polypeptide reads, in one-letter code: S-adenosylmethionine:tRNA ribosyltransferase-isomerase (345 aa).

Belongs to the QueA family. Monomer.

Its subcellular location is the cytoplasm. It catalyses the reaction 7-aminomethyl-7-carbaguanosine(34) in tRNA + S-adenosyl-L-methionine = epoxyqueuosine(34) in tRNA + adenine + L-methionine + 2 H(+). It functions in the pathway tRNA modification; tRNA-queuosine biosynthesis. In terms of biological role, transfers and isomerizes the ribose moiety from AdoMet to the 7-aminomethyl group of 7-deazaguanine (preQ1-tRNA) to give epoxyqueuosine (oQ-tRNA). The polypeptide is S-adenosylmethionine:tRNA ribosyltransferase-isomerase (Shewanella loihica (strain ATCC BAA-1088 / PV-4)).